A 369-amino-acid chain; its full sequence is Peptidyl-prolyl cis-trans isomerase D (369 aa).

Positions 8-173 (YFDLSIGGKP…ADVRIDACGI (166 aa)) constitute a PPIase cyclophilin-type domain. 3 TPR repeats span residues 218-251 (VEAV…LQEY), 269-302 (VAVH…AADD), and 306-339 (AKAL…QPGD).

It belongs to the cyclophilin-type PPIase family. PPIase D subfamily.

Its subcellular location is the cytoplasm. It carries out the reaction [protein]-peptidylproline (omega=180) = [protein]-peptidylproline (omega=0). In terms of biological role, PPIases accelerate the folding of proteins. It catalyzes the cis-trans isomerization of proline imidic peptide bonds in oligopeptides. In Eremothecium gossypii (strain ATCC 10895 / CBS 109.51 / FGSC 9923 / NRRL Y-1056) (Yeast), this protein is Peptidyl-prolyl cis-trans isomerase D (CPR6).